A 150-amino-acid polypeptide reads, in one-letter code: Putative FAD-linked sulfhydryl oxidase 088R (150 aa).

Residues 24-128 (GPFGPSGFGP…VTLQKAICIY (105 aa)) form the ERV/ALR sulfhydryl oxidase domain. A disulfide bond links Cys-74 and Cys-77.

Requires FAD as cofactor.

The enzyme catalyses 2 R'C(R)SH + O2 = R'C(R)S-S(R)CR' + H2O2. Its function is as follows. FAD-dependent sulfhydryl oxidase that catalyzes disulfide bond formation. The chain is Putative FAD-linked sulfhydryl oxidase 088R from Dryophytes versicolor (chameleon treefrog).